A 133-amino-acid chain; its full sequence is p53 and DNA damage-regulated protein 1 (133 aa).

This sequence belongs to the prefoldin subunit beta family. In terms of assembly, component of the PAQosome complex which is responsible for the biogenesis of several protein complexes and which consists of R2TP complex members RUVBL1, RUVBL2, RPAP3 and PIH1D1, URI complex members PFDN2, PFDN6, PDRG1, UXT and URI1 as well as ASDURF, POLR2E and DNAAF10/WDR92.

The protein localises to the cytoplasm. May play a role in chaperone-mediated protein folding. The sequence is that of p53 and DNA damage-regulated protein 1 (Pdrg1) from Rattus norvegicus (Rat).